We begin with the raw amino-acid sequence, 333 residues long: Taste receptor type 2 member 38 (333 aa).

At 1-17 (MLTLTRICAVSYEVRST) the chain is on the extracellular side. The chain crosses the membrane as a helical span at residues 18-38 (FLFISVLEFAVGFLTNAFIFL). The Cytoplasmic segment spans residues 39–55 (VNFWDVVKRQPLSNSDC). The helical transmembrane segment at 56 to 76 (VLLCLSISRLFLHGLLFLSAI) threads the bilayer. Topologically, residues 77-94 (QLTHFQKLSEPLNHSYQA) are extracellular. Residues 95–115 (IIMLWIIANQANLWLAACLSL) traverse the membrane as a helical segment. Topologically, residues 116-142 (LYCSKLIRFSHTFLICLASWVSRKISQ) are cytoplasmic. The chain crosses the membrane as a helical span at residues 143–163 (MLLGIILCSCICTVLCVWCFF). The Extracellular segment spans residues 164-190 (SRPHFTVTTFLFMNNNTRLNWQIKDLN). Residue Asn178 is glycosylated (N-linked (GlcNAc...) asparagine). The helical transmembrane segment at 191–211 (LFYSFLFCYLWSVPPFLLFLV) threads the bilayer. Topologically, residues 212-251 (SSGMLTVSLGRHMRTMKVYTRDSRDPSLEAHIKALKSLVS) are cytoplasmic. Residues 252-272 (FFCFFVISSCAAFISVPLLIL) traverse the membrane as a helical segment. The Extracellular segment spans residues 273 to 276 (WRNK). Residues 277-297 (IGVMVCVGIMAACPSGHAAVL) traverse the membrane as a helical segment. Over 298-333 (ISGNATLRRAVTTILLWAQSSMKVRADHKADSRTLC) the chain is Cytoplasmic.

It belongs to the G-protein coupled receptor T2R family.

The protein localises to the membrane. Receptor that may play a role in the perception of bitterness and is gustducin-linked. May play a role in sensing the chemical composition of the gastrointestinal content. The activity of this receptor may stimulate alpha gustducin, mediate PLC-beta-2 activation and lead to the gating of TRPM5. This Pongo pygmaeus (Bornean orangutan) protein is Taste receptor type 2 member 38 (TAS2R38).